We begin with the raw amino-acid sequence, 125 residues long: Large ribosomal subunit protein bL12 (125 aa).

Belongs to the bacterial ribosomal protein bL12 family. Homodimer. Part of the ribosomal stalk of the 50S ribosomal subunit. Forms a multimeric L10(L12)X complex, where L10 forms an elongated spine to which 2 to 4 L12 dimers bind in a sequential fashion. Binds GTP-bound translation factors.

Its function is as follows. Forms part of the ribosomal stalk which helps the ribosome interact with GTP-bound translation factors. Is thus essential for accurate translation. This chain is Large ribosomal subunit protein bL12, found in Anaeromyxobacter dehalogenans (strain 2CP-1 / ATCC BAA-258).